The chain runs to 170 residues: Cytochrome b6-f complex subunit 4 (170 aa).

Helical transmembrane passes span 46–66, 105–125, and 141–161; these read LLFM…GLSV, LLGI…PFIE, and TVFL…TLPL.

This sequence belongs to the cytochrome b family. PetD subfamily. The 4 large subunits of the cytochrome b6-f complex are cytochrome b6, subunit IV (17 kDa polypeptide, PetD), cytochrome f and the Rieske protein, while the 4 small subunits are PetG, PetL, PetM and PetN. The complex functions as a dimer.

The protein localises to the cellular thylakoid membrane. Functionally, component of the cytochrome b6-f complex, which mediates electron transfer between photosystem II (PSII) and photosystem I (PSI), cyclic electron flow around PSI, and state transitions. The chain is Cytochrome b6-f complex subunit 4 from Synechococcus sp. (strain JA-2-3B'a(2-13)) (Cyanobacteria bacterium Yellowstone B-Prime).